The primary structure comprises 256 residues: DNA repair protein RecO (256 aa).

It belongs to the RecO family.

Involved in DNA repair and RecF pathway recombination. The sequence is that of DNA repair protein RecO from Pelotomaculum thermopropionicum (strain DSM 13744 / JCM 10971 / SI).